A 156-amino-acid chain; its full sequence is MDSAGLHINFRLSHVLTVVTCILYILPPTTTAYSLPAPGKAAFQHQLSKRDVSDGSAERRPYTRMGSGGLKLHCQVHPANCPGGLMVTKKSDLLGALLSRNSPSSYGLPSRDMSTAYKRQDVRQQLRMFDDLVQLRKLIETPSVYPSEEDEARLYD.

The N-terminal stretch at 1–26 (MDSAGLHINFRLSHVLTVVTCILYIL) is a signal peptide. Residues 27–48 (PPTTTAYSLPAPGKAAFQHQLS) constitute a propeptide that is removed on maturation. The cysteines at positions 74 and 81 are disulfide-linked. A Pyrrolidone carboxylic acid modification is found at Gln-120.

As to expression, expressed within the abdominal ganglion in neurons R15, RB(HE), the two L9(G) gill motoneurons, and L40 interneuron, all are parts of autonomic control circuit that contributes to implementing a central command to coordinate autonomic activity with escape locomotion.

It is found in the secreted. The alpha-1 peptide acts as an osmoregulatory peptide, increasing blood volume, and also modulates the activity of a set of cardiac motor neurons that control heart rate. This Aplysia californica (California sea hare) protein is Neuroactive polyprotein R15.